Reading from the N-terminus, the 216-residue chain is 3-isopropylmalate dehydratase small subunit (216 aa).

This sequence belongs to the LeuD family. LeuD type 1 subfamily. In terms of assembly, heterodimer of LeuC and LeuD.

It carries out the reaction (2R,3S)-3-isopropylmalate = (2S)-2-isopropylmalate. Its pathway is amino-acid biosynthesis; L-leucine biosynthesis; L-leucine from 3-methyl-2-oxobutanoate: step 2/4. Catalyzes the isomerization between 2-isopropylmalate and 3-isopropylmalate, via the formation of 2-isopropylmaleate. This chain is 3-isopropylmalate dehydratase small subunit, found in Polaromonas naphthalenivorans (strain CJ2).